The chain runs to 415 residues: F-box protein ETP1 (415 aa).

Residues 1–46 (MTIPDLCNDLVDEILCRVPARNLKRLRSTSKRWNRLFKDDRRFARE) form the F-box domain.

Interacts with EIN2 (via C-terminus).

Its function is as follows. Negative regulator of EIN2 protein stability. This chain is F-box protein ETP1, found in Arabidopsis thaliana (Mouse-ear cress).